The primary structure comprises 112 residues: Large ribosomal subunit protein bL20c (112 aa).

This sequence belongs to the bacterial ribosomal protein bL20 family.

The protein resides in the plastid. It localises to the chloroplast. In terms of biological role, binds directly to 23S ribosomal RNA and is necessary for the in vitro assembly process of the 50S ribosomal subunit. It is not involved in the protein synthesizing functions of that subunit. In Anthoceros angustus (Hornwort), this protein is Large ribosomal subunit protein bL20c (rpl20).